The chain runs to 91 residues: Non-specific lipid-transfer protein 1 (91 aa).

4 disulfide bridges follow: Cys-3-Cys-50, Cys-13-Cys-27, Cys-28-Cys-73, and Cys-48-Cys-87.

The protein belongs to the plant LTP family.

Plant non-specific lipid-transfer proteins transfer phospholipids as well as galactolipids across membranes. May play a role in wax or cutin deposition in the cell walls of expanding epidermal cells and certain secretory tissues. This Prunus domestica (Garden plum) protein is Non-specific lipid-transfer protein 1.